The primary structure comprises 99 residues: MAMLTLEEIESILTAHKKELRERFGVREIGVFGSYVRGEAKEDSDVDILVDFEEIPSLLKFIELEEYLEALLGLRVDLVMKSSLKSGIAKTVLREVVYV.

The short motif at 33–47 (GSYVRGEAKEDSDVD) is the GSX(10)DXD motif element. Active-site residues include D45 and D47. Mg(2+)-binding residues include D45, D47, and D77.

Belongs to the MntA antitoxin family. It depends on Mg(2+) as a cofactor.

The catalysed reaction is L-tyrosyl-[protein] + ATP = O-(5'-adenylyl)-L-tyrosyl-[protein] + diphosphate. It carries out the reaction O-(5'-adenylyl)-L-tyrosyl-[protein] + ATP = O-[5'-(adenylyl-(5'-&gt;3')-adenylyl)]-L-tyrosyl-[protein] + diphosphate. In terms of biological role, antitoxin component of a type VII toxin-antitoxin (TA) system. Overexpression in E.coli neutralizes the toxic effect of cognate toxin HepT. Neutralization is mostly due to AMPylation of the toxin by this enzyme. This chain is Protein adenylyltransferase MntA, found in Thermococcus cleftensis (strain DSM 27260 / KACC 17922 / CL1).